We begin with the raw amino-acid sequence, 384 residues long: Autophagy-related protein 25 (384 aa).

Coiled coils occupy residues 132–236 (KETA…RRAS) and 342–379 (KKNN…QWKT). The segment at 224-247 (ESRLSNMNKRRASPRDDAEAEPKR) is disordered. The segment covering 236 to 247 (SPRDDAEAEPKR) has biased composition (basic and acidic residues).

The protein belongs to the ADIP family.

Its subcellular location is the preautophagosomal structure membrane. In terms of biological role, specifically required for selective degradation of peroxisomes via macropexophagy. This chain is Autophagy-related protein 25 (ATG25), found in Pichia angusta (Yeast).